Reading from the N-terminus, the 220-residue chain is Large ribosomal subunit protein uL3 (220 aa).

The protein belongs to the universal ribosomal protein uL3 family. Part of the 50S ribosomal subunit. Forms a cluster with proteins L14 and L19.

One of the primary rRNA binding proteins, it binds directly near the 3'-end of the 23S rRNA, where it nucleates assembly of the 50S subunit. The sequence is that of Large ribosomal subunit protein uL3 from Staphylococcus carnosus (strain TM300).